The sequence spans 245 residues: Eukaryotic translation initiation factor 3 subunit K (245 aa).

Residues 46–227 form the PCI domain; that stretch reads YDCYANLALL…EAKGTVVREN (182 aa).

Belongs to the eIF-3 subunit K family. In terms of assembly, component of the eukaryotic translation initiation factor 3 (eIF-3) complex.

It localises to the cytoplasm. Functionally, component of the eukaryotic translation initiation factor 3 (eIF-3) complex, which is involved in protein synthesis of a specialized repertoire of mRNAs and, together with other initiation factors, stimulates binding of mRNA and methionyl-tRNAi to the 40S ribosome. The eIF-3 complex specifically targets and initiates translation of a subset of mRNAs involved in cell proliferation. In Phaeosphaeria nodorum (strain SN15 / ATCC MYA-4574 / FGSC 10173) (Glume blotch fungus), this protein is Eukaryotic translation initiation factor 3 subunit K.